Reading from the N-terminus, the 363-residue chain is Peptide chain release factor 1 (363 aa).

An N5-methylglutamine modification is found at Q237. Basic and acidic residues predominate over residues 286-296; it reads EKRRSAEESTR. Residues 286 to 305 are disordered; that stretch reads EKRRSAEESTRRSLVASGDR.

The protein belongs to the prokaryotic/mitochondrial release factor family. Methylated by PrmC. Methylation increases the termination efficiency of RF1.

The protein localises to the cytoplasm. In terms of biological role, peptide chain release factor 1 directs the termination of translation in response to the peptide chain termination codons UAG and UAA. The protein is Peptide chain release factor 1 of Shewanella baltica (strain OS155 / ATCC BAA-1091).